Here is a 251-residue protein sequence, read N- to C-terminus: uncharacterized protein (251 aa).

The protein localises to the mitochondrion. This is an uncharacterized protein from Arabidopsis thaliana (Mouse-ear cress).